The sequence spans 296 residues: ATP synthase gamma chain (296 aa).

The disordered stretch occupies residues 194–216 (IPASAGQAANDNAGSDQPAGDYE).

The protein belongs to the ATPase gamma chain family. As to quaternary structure, F-type ATPases have 2 components, CF(1) - the catalytic core - and CF(0) - the membrane proton channel. CF(1) has five subunits: alpha(3), beta(3), gamma(1), delta(1), epsilon(1). CF(0) has three main subunits: a, b and c.

It is found in the cell inner membrane. Functionally, produces ATP from ADP in the presence of a proton gradient across the membrane. The gamma chain is believed to be important in regulating ATPase activity and the flow of protons through the CF(0) complex. The chain is ATP synthase gamma chain from Acidiphilium cryptum (strain JF-5).